Reading from the N-terminus, the 859-residue chain is MINNEPFPSADSASILTTSTSNNSLMSYNHQPQLSINSVQSLLEPVTPPPLGQMNNKRNHQKAHSLDLSGFNQFISSTQSPLALMNNTSTSNSANSFSPNPNAASNSTGLSASMANPPAILPLINEFDLEMDGPRRKSSHDFTVVAPSNSGVNTSSLIMETPSSSVTPAASLRNFSNSNNAASKCGVDNSSFGLSSSTSSSMVEISALPLRDLDYIKLATDQFGCRFLQKKLETPSESNMVRDLMYEQIKPFFLDLILDPFGNYLVQKLCDYLTAEQKTLLIQTIYPNVFQISINQYGTRSLQKIIDTVDNEVQIDLIIKGFSQEFTSIEQVVTLINDLNGNHVIQKCIFKFSPSKFGFIIDAIVEQNNIITISTHKHGCCVLQKLLSVCTLQQIFKISVKIVQFLPGLINDQFGNYIIQFLLDIKELDFYLLAELFNRLSNELCQLSCLKFSSNVVEKFIKKLFRIITGFIVNNNGGASQRTAVASDDVINASMNILLTTIDIFTVNLNVLIRDNFGNYALQTLLDVKNYSPLLAYNKNSNAIGQNSSSTLNYGNFCNDFSLKIGNLIVLTKELLPSIKTTSYAKKIKLKVKAYAEATGIPFTDISPQVTAMSHNNLQTINNENKNPHNKNSHNHNHNHNHNHAHNNNNNNNQKSHTRHFSLPANAYHRRSNSSVTNNFSNQYAQDQKIHSPQQIMNFNQNAYPSMGAPSFNSQTNPPLVSHNSLQNFDNRQFANLMAHPNSAAPIHSFSSSNITNVNPNVSRGFKQPGFMMNETDKINANHFSPYSNANSQNFNESFVPRMQYQTEGANWDSSLSMKSQHIGQGPYNQVNMSRNASISNMPAMNTARTSDELQFTLP.

Residues 85-108 (MNNTSTSNSANSFSPNPNAASNST) are disordered. The segment covering 86 to 108 (NNTSTSNSANSFSPNPNAASNST) has biased composition (low complexity). In terms of domain architecture, PUM-HD spans 188-596 (DNSSFGLSSS…KIKLKVKAYA (409 aa)). Pumilio repeat units follow at residues 209-247 (PLRDLDYIKLATDQFGCRFLQKKLETPSESNMVRDLMYE), 248-283 (QIKPFFLDLILDPFGNYLVQKLCDYLTAEQKTLLIQ), 284-320 (TIYPNVFQISINQYGTRSLQKIIDTVDNEVQIDLIIK), 325-362 (EFTSIEQVVTLINDLNGNHVIQKCIFKFSPSKFGFIID), 363-400 (AIVEQNNIITISTHKHGCCVLQKLLSVCTLQQIFKISV), 401-438 (KIVQFLPGLINDQFGNYIIQFLLDIKELDFYLLAELFN), 439-474 (RLSNELCQLSCLKFSSNVVEKFIKKLFRIITGFIVN), and 503-539 (DIFTVNLNVLIRDNFGNYALQTLLDVKNYSPLLAYNK). Residues 620-658 (TINNENKNPHNKNSHNHNHNHNHNHAHNNNNNNNQKSHT) form a disordered region. Positions 628 to 645 (PHNKNSHNHNHNHNHNHA) are enriched in basic residues. Residues Ser662, Ser834, and Ser838 each carry the phosphoserine modification.

It is found in the cytoplasm. In terms of biological role, RNA-binding protein involved in post-transcriptional regulation. Negatively regulates expression of HO by binding to the 3'-UTR of HO mRNA. Predominantly binds to mRNAs encoding chromatin modifiers and spindle pole body components. Recognizes and binds to 5'-TGTAA[CT]A[AT]TA-3' in the 3'-UTR of target mRNAs. Multicopy suppressor of POP2 mutation. Required for high temperature growth. The chain is Suppressor protein MPT5 (MPT5) from Saccharomyces cerevisiae (strain ATCC 204508 / S288c) (Baker's yeast).